The following is a 397-amino-acid chain: CCA-adding enzyme (397 aa).

The ATP site is built by Gly26 and Arg29. Gly26 and Arg29 together coordinate CTP. Mg(2+) is bound by residues Asp39 and Asp41. Residues Arg110, Asp153, Arg156, Arg159, and Arg162 each coordinate ATP. 5 residues coordinate CTP: Arg110, Asp153, Arg156, Arg159, and Arg162.

It belongs to the tRNA nucleotidyltransferase/poly(A) polymerase family. Bacterial CCA-adding enzyme type 3 subfamily. In terms of assembly, homodimer. Requires Mg(2+) as cofactor.

It carries out the reaction a tRNA precursor + 2 CTP + ATP = a tRNA with a 3' CCA end + 3 diphosphate. The enzyme catalyses a tRNA with a 3' CCA end + 2 CTP + ATP = a tRNA with a 3' CCACCA end + 3 diphosphate. Its function is as follows. Catalyzes the addition and repair of the essential 3'-terminal CCA sequence in tRNAs without using a nucleic acid template. Adds these three nucleotides in the order of C, C, and A to the tRNA nucleotide-73, using CTP and ATP as substrates and producing inorganic pyrophosphate. tRNA 3'-terminal CCA addition is required both for tRNA processing and repair. Also involved in tRNA surveillance by mediating tandem CCA addition to generate a CCACCA at the 3' terminus of unstable tRNAs. While stable tRNAs receive only 3'-terminal CCA, unstable tRNAs are marked with CCACCA and rapidly degraded. In Bacillus thuringiensis subsp. konkukian (strain 97-27), this protein is CCA-adding enzyme.